A 272-amino-acid chain; its full sequence is HMP-PP phosphatase (272 aa).

Asp8 (nucleophile) is an active-site residue. Mg(2+) contacts are provided by Asp8, Asp10, and Asp212.

The protein belongs to the HAD-like hydrolase superfamily. Cof family. Mg(2+) is required as a cofactor.

The catalysed reaction is 4-amino-2-methyl-5-(diphosphooxymethyl)pyrimidine + H2O = 4-amino-2-methyl-5-(phosphooxymethyl)pyrimidine + phosphate + H(+). In terms of biological role, catalyzes the hydrolysis of 4-amino-2-methyl-5-hydroxymethylpyrimidine pyrophosphate (HMP-PP) to 4-amino-2-methyl-5-hydroxymethylpyrimidine phosphate (HMP-P). The sequence is that of HMP-PP phosphatase from Escherichia fergusonii (strain ATCC 35469 / DSM 13698 / CCUG 18766 / IAM 14443 / JCM 21226 / LMG 7866 / NBRC 102419 / NCTC 12128 / CDC 0568-73).